The following is a 307-amino-acid chain: Serine/threonine-protein phosphatase 4 catalytic subunit B (307 aa).

The Mn(2+) site is built by Asp54, His56, Asp82, and Asn114. Residue His115 is the Proton donor of the active site. Residues His164 and His238 each contribute to the Mn(2+) site. Position 307 is a leucine methyl ester (Leu307).

Belongs to the PPP phosphatase family. PP-4 (PP-X) subfamily. Serine/threonine-protein phosphatase 4 (PP4) occurs in different assemblies of the catalytic and one or more regulatory subunits. Requires Mn(2+) as cofactor.

Its subcellular location is the cytoplasm. It is found in the cytoskeleton. The protein resides in the microtubule organizing center. It localises to the centrosome. The enzyme catalyses O-phospho-L-seryl-[protein] + H2O = L-seryl-[protein] + phosphate. It catalyses the reaction O-phospho-L-threonyl-[protein] + H2O = L-threonyl-[protein] + phosphate. Protein phosphatase that regulates many processes such as microtubule organization at centrosomes. This Danio rerio (Zebrafish) protein is Serine/threonine-protein phosphatase 4 catalytic subunit B (ppp4cb).